The primary structure comprises 655 residues: Forkhead box protein O1 (655 aa).

Disordered stretches follow at residues 1 to 63 (MAEA…SASA) and 116 to 158 (GCLH…SRRN). The residue at position 24 (threonine 24) is a Phosphothreonine; by PKB/AKT1 or PKB/AKT2 and SGK1. Residues 33-63 (SQSNSATSSPAPSGSAAANPDAAAGLPSASA) are compositionally biased toward low complexity. Positions 120-141 (PAPPQPPPPGPLSQHPPVPPAA) are enriched in pro residues. The fork-head DNA-binding region spans 159–235 (AWGNLSYADL…VQNEGTGKSS (77 aa)). DNA-binding regions lie at residues 211-218 (NSIRHNLS) and 234-237 (SSWW). 4 positions are modified to phosphoserine; by STK4/MST1: serine 212, serine 218, serine 234, and serine 235. Residues 234 to 344 (SSWWMLNPEG…QDDLGEGDVH (111 aa)) are disordered. N6-acetyllysine occurs at positions 245 and 248. Serine 249 bears the Phosphoserine; by CDK1 mark. Omega-N-methylarginine; by PRMT1 occurs at positions 251 and 253. The short motif at 251–253 (RRR) is the Nuclear localization signal element. Position 256 is a phosphoserine; by PKB/AKT1 and SGK1 (serine 256). Lysine 262, lysine 265, and lysine 274 each carry N6-acetyllysine. Residues 264–275 (AKSRSRAAKKKA) show a composition bias toward basic residues. The tract at residues 283–563 (GAGDSPGSQF…RLTQVKTPVQ (281 aa)) is sufficient for interaction with NLK. Phosphoserine is present on residues serine 287 and serine 298. The span at 309-326 (NWSTFRPRTSSNASTISG) shows a compositional bias: polar residues. Phosphoserine; by PKB/AKT1 is present on serine 319. The residue at position 322 (serine 322) is a Phosphoserine; by CK1 and SGK1. Phosphoserine; by CK1 is present on serine 325. Position 329 is a phosphoserine; by DYRK1A (serine 329). Position 333 is a phosphothreonine (threonine 333). The segment at 363–459 (SEISNPENME…GGMSQYNCAP (97 aa)) is required for interaction with RUNX2. Residue lysine 423 is modified to N6-acetyllysine. The Required for interaction with SIRT1 signature appears at 462–466 (LKELL). A compositionally biased stretch (polar residues) spans 507–534 (YGSQASHNKMMNPSSHTHPGHAQQTSAV). The disordered stretch occupies residues 507 to 537 (YGSQASHNKMMNPSSHTHPGHAQQTSAVNGR).

As to quaternary structure, interacts with LRPPRC. Interacts with RUNX2; the interaction inhibits RUNX2 transcriptional activity and mediates the IGF1/insulin-dependent BGLAP expression in osteoblasts Interacts with PPP2R1A; the interaction regulates the dephosphorylation of FOXO1 at Thr-24 and Ser-256 leading to its nuclear import. Interacts (acetylated form) with PPARG. Interacts with XBP1 isoform 2; this interaction is direct and leads to FOXO1 ubiquitination and degradation via the proteasome pathway. Interacts with NLK. Interacts with SIRT1; the interaction results in the deacetylation of FOXO1 leading to activation of FOXO1-mediated transcription of genes involved in DNA repair and stress resistance. Binds to CDK1. Interacts with the 14-3-3 proteins, YWHAG and YWHAZ; the interactions require insulin-stimulated phosphorylation on Thr-24, promote nuclear exit and loss of transcriptional activity. Interacts with SKP2; the interaction ubiquitinates FOXO1 leading to its proteasomal degradation. The interaction requires the presence of KRIT1. Interacts (via the C-terminal half) with ATF4 (via its DNA-binding domain); the interaction occurs in osteoblasts, regulates glucose homeostasis via suppression of beta-cell proliferation and subsequent decrease in insulin production. Interacts with PRMT1; the interaction methylates FOXO1, prevents PKB/AKT1 phosphorylation and retains FOXO1 in the nucleus. Interacts with EP300 and CREBBP; the interactions acetylate FOXO1. Interacts with SIRT2; the interaction is disrupted in response to oxidative stress or serum deprivation, leading to increased level of acetylated FOXO1, which promotes stress-induced autophagy by stimulating E1-like activating enzyme ATG7. Interacts (acetylated form) with ATG7; the interaction is increased in response to oxidative stress or serum deprivation and promotes the autophagic process leading to cell death. Interacts (via the Fork-head domain) with CEBPA; the interaction increases when FOXO1 is deacetylated. Interacts with WDFY2. Forms a complex with WDFY2 and AKT1. Interacts with CRY1. Interacts with PPIA/CYPA; the interaction promotes FOXO1 dephosphorylation, nuclear accumulation and transcriptional activity. Interacts with TOX4; FOXO1 is required for full induction of TOX4-dependent activity and the interaction is inhibited by insulin. Interacts (when phosphorylated on Ser-256) with STUB1/CHIP. Phosphorylation by NLK promotes nuclear export and inhibits the transcriptional activity. In response to growth factors, phosphorylation on Thr-24, Ser-256 and Ser-322 by PKB/AKT1 promotes nuclear export and inactivation of transactivational activity. Phosphorylation on Thr-24 is required for binding 14-3-3 proteins. Phosphorylation of Ser-256 decreases DNA-binding activity and promotes the phosphorylation of Thr-24 and Ser-319, permitting phosphorylation of Ser-322 and Ser-325, probably by CDK1, leading to nuclear exclusion and loss of function. Stress signals, such as response to oxygen or nitric oxide, attenuate the PKB/AKT1-mediated phosphorylation leading to nuclear retention. Phosphorylation of Ser-329 is independent of IGF1 and leads to reduced function. Dephosphorylated on Thr-24 and Ser-256 by PP2A in beta-cells under oxidative stress leading to nuclear retention. Phosphorylation of Ser-249 by CDK1 disrupts binding of 14-3-3 proteins leading to nuclear accumulation and has no effect on DNA-binding nor transcriptional activity. Phosphorylation by STK4/MST1 on Ser-212, upon oxidative stress, inhibits binding to 14-3-3 proteins and nuclear export. PPIA/CYPA promotes its dephosphorylation on Ser-256. In terms of processing, ubiquitinated by SKP2. Ubiquitination leads to proteasomal degradation. Ubiquitinated by STUB1/CHIP; when Ser-256 is phosphorylated. Post-translationally, methylation inhibits AKT1-mediated phosphorylation at Ser-256 and is increased by oxidative stress. Acetylated. Acetylation at Lys-262, Lys-265 and Lys-274 are necessary for autophagic cell death induction. Deacetylated by SIRT2 in response to oxidative stress or serum deprivation, thereby negatively regulating FOXO1-mediated autophagic cell death. Once in the nucleus, acetylated by CREBBP/EP300. Acetylation diminishes the interaction with target DNA and attenuates the transcriptional activity. It increases the phosphorylation at Ser-256. Deacetylation by SIRT1 results in reactivation of the transcriptional activity. Oxidative stress by hydrogen peroxide treatment appears to promote deacetylation and uncoupling of insulin-induced phosphorylation. By contrast, resveratrol acts independently of acetylation. Acetylated at Lys-423, promoting its localization to the nucleus and transcription factor activity. Deacetylation at Lys-423 by SIRT6, promotes its translocation into the cytoplasm, preventing its transcription factor activity. Deacetylation and subsequent inhibition by SIRT6 has different effects depending on cell types: it inhibits gluconeogenesis in hepatocytes, promotes glucose sensing in pancreatic beta-cells and regulates lipid catabolism in brown adipocytes. Expressed in umbilical endothelial cells (at protein level). Abundantly expressed in skeletal muscle and ovary, with lower expression in the heart, placenta, lung, liver, pancreas, spleen, testis and small intestine. Weakly expressed in the brain, thymus, prostate and mucosal lining of the colon.

Its subcellular location is the cytoplasm. The protein localises to the nucleus. Its function is as follows. Transcription factor that is the main target of insulin signaling and regulates metabolic homeostasis in response to oxidative stress. Binds to the insulin response element (IRE) with consensus sequence 5'-TT[G/A]TTTTG-3' and the related Daf-16 family binding element (DBE) with consensus sequence 5'-TT[G/A]TTTAC-3'. Activity suppressed by insulin. Main regulator of redox balance and osteoblast numbers and controls bone mass. Orchestrates the endocrine function of the skeleton in regulating glucose metabolism. Also acts as a key regulator of chondrogenic commitment of skeletal progenitor cells in response to lipid availability: when lipids levels are low, translocates to the nucleus and promotes expression of SOX9, which induces chondrogenic commitment and suppresses fatty acid oxidation. Acts synergistically with ATF4 to suppress osteocalcin/BGLAP activity, increasing glucose levels and triggering glucose intolerance and insulin insensitivity. Also suppresses the transcriptional activity of RUNX2, an upstream activator of osteocalcin/BGLAP. Acts as an inhibitor of glucose sensing in pancreatic beta cells by acting as a transcription repressor and suppressing expression of PDX1. In hepatocytes, promotes gluconeogenesis by acting together with PPARGC1A and CEBPA to activate the expression of genes such as IGFBP1, G6PC1 and PCK1. Also promotes gluconeogenesis by directly promoting expression of PPARGC1A and G6PC1. Important regulator of cell death acting downstream of CDK1, PKB/AKT1 and STK4/MST1. Promotes neural cell death. Mediates insulin action on adipose tissue. Regulates the expression of adipogenic genes such as PPARG during preadipocyte differentiation and, adipocyte size and adipose tissue-specific gene expression in response to excessive calorie intake. Regulates the transcriptional activity of GADD45A and repair of nitric oxide-damaged DNA in beta-cells. Required for the autophagic cell death induction in response to starvation or oxidative stress in a transcription-independent manner. Mediates the function of MLIP in cardiomyocytes hypertrophy and cardiac remodeling. Positive regulator of apoptosis in cardiac smooth muscle cells as a result of its transcriptional activation of pro-apoptotic genes. Regulates endothelial cell (EC) viability and apoptosis in a PPIA/CYPA-dependent manner via transcription of CCL2 and BCL2L11 which are involved in EC chemotaxis and apoptosis. This is Forkhead box protein O1 from Homo sapiens (Human).